The primary structure comprises 157 residues: Nascent polypeptide-associated complex subunit beta-1 (157 aa).

Disordered stretches follow at residues 19–42 (KVGGTRRKLNKKAGSSAGANKDDT) and 126–157 (EKHEAKAPADAEKKDEAIPELVEGQTFDADVE). One can recognise an NAC-A/B domain in the interval 38–103 (NKDDTKLQSQ…PQEKNLQDLF (66 aa)). Residues 126–142 (EKHEAKAPADAEKKDEA) are compositionally biased toward basic and acidic residues. The residue at position 151 (threonine 151) is a Phosphothreonine.

Belongs to the NAC-beta family. In terms of assembly, part of the nascent polypeptide-associated complex (NAC), consisting of EGD2 and either EGD1 or BTT1. NAC associates with ribosomes via EGD1 or BTT1, and with the CCR4-NOT complex.

The protein resides in the cytoplasm. The protein localises to the nucleus. Component of the nascent polypeptide-associated complex (NAC), a dynamic component of the ribosomal exit tunnel, protecting the emerging polypeptides from interaction with other cytoplasmic proteins to ensure appropriate nascent protein targeting. The NAC complex also promotes mitochondrial protein import by enhancing productive ribosome interactions with the outer mitochondrial membrane and blocks the inappropriate interaction of ribosomes translating non-secretory nascent polypeptides with translocation sites in the membrane of the endoplasmic reticulum. EGD1 may act as a transcription factor that exert a negative effect on the expression of several genes that are transcribed by RNA polymerase II. The chain is Nascent polypeptide-associated complex subunit beta-1 (EGD1) from Saccharomyces cerevisiae (strain YJM789) (Baker's yeast).